The chain runs to 92 residues: UPF0250 protein Rmag_0541 (92 aa).

Belongs to the UPF0250 family.

The sequence is that of UPF0250 protein Rmag_0541 from Ruthia magnifica subsp. Calyptogena magnifica.